Consider the following 602-residue polypeptide: Elongation factor 4 (602 aa).

One can recognise a tr-type G domain in the interval 7-189; sequence SRIRNFCIIA…AVVDRVPAPA (183 aa). Residues 19–24 and 136–139 each bind GTP; these read DHGKST and NKID.

The protein belongs to the TRAFAC class translation factor GTPase superfamily. Classic translation factor GTPase family. LepA subfamily.

The protein resides in the cell inner membrane. The enzyme catalyses GTP + H2O = GDP + phosphate + H(+). In terms of biological role, required for accurate and efficient protein synthesis under certain stress conditions. May act as a fidelity factor of the translation reaction, by catalyzing a one-codon backward translocation of tRNAs on improperly translocated ribosomes. Back-translocation proceeds from a post-translocation (POST) complex to a pre-translocation (PRE) complex, thus giving elongation factor G a second chance to translocate the tRNAs correctly. Binds to ribosomes in a GTP-dependent manner. This chain is Elongation factor 4, found in Synechococcus sp. (strain CC9902).